We begin with the raw amino-acid sequence, 384 residues long: Spermidine/putrescine import ATP-binding protein PotA (384 aa).

In terms of domain architecture, ABC transporter spans 6 to 238 (ITFNNVSKTF…PINHFVANFI (233 aa)). 40–47 (GASGSGKS) is a binding site for ATP.

This sequence belongs to the ABC transporter superfamily. Spermidine/putrescine importer (TC 3.A.1.11.1) family. In terms of assembly, the complex is composed of two ATP-binding proteins (PotA), two transmembrane proteins (PotB and PotC) and a solute-binding protein (PotD).

It localises to the cell membrane. It carries out the reaction ATP + H2O + polyamine-[polyamine-binding protein]Side 1 = ADP + phosphate + polyamineSide 2 + [polyamine-binding protein]Side 1.. In terms of biological role, part of the ABC transporter complex PotABCD involved in spermidine/putrescine import. Responsible for energy coupling to the transport system. This chain is Spermidine/putrescine import ATP-binding protein PotA, found in Streptococcus pyogenes serotype M6 (strain ATCC BAA-946 / MGAS10394).